The sequence spans 371 residues: Protein STRICTOSIDINE SYNTHASE-LIKE 6 (371 aa).

The N-terminal stretch at 1 to 21 (MPVFLSSRFLFFCIIVPLLIS) is a signal peptide. Asn101 and Asn137 each carry an N-linked (GlcNAc...) asparagine glycan. Tyr303 carries the phosphotyrosine modification.

The protein belongs to the strictosidine synthase family.

It is found in the vacuole. This Arabidopsis thaliana (Mouse-ear cress) protein is Protein STRICTOSIDINE SYNTHASE-LIKE 6.